Here is a 472-residue protein sequence, read N- to C-terminus: Transmembrane protein 8B (472 aa).

Positions 1 to 37 are disordered; sequence MNMPQSLGNQPLPPEPPSLRTPAEGPGATSPPEHCWP. The Extracellular portion of the chain corresponds to 1–233; the sequence is MNMPQSLGNQ…ADALTYGFQL (233 aa). N-linked (GlcNAc...) asparagine glycans are attached at residues asparagine 92 and asparagine 100. Positions 182–221 constitute an EGF-like domain; it reads FLSPCVDDCGPYGQCKLLRTHNYLYAACECKAGWRGWGCT. Disulfide bonds link cysteine 186–cysteine 196, cysteine 190–cysteine 209, and cysteine 211–cysteine 220. A helical transmembrane segment spans residues 234–254; that stretch reads LSTLLLCLSNLMFLPPVVLAI. Residues 255–257 lie on the Cytoplasmic side of the membrane; it reads RSR. A helical membrane pass occupies residues 258-277; the sequence is YVLEAAVYTFTMFFSTFYHA. Over 278–292 the chain is Extracellular; that stretch reads CDQPGIVVFCIMDYD. Residues 293–313 form a helical membrane-spanning segment; sequence VLQFCDFLGSLMSVWVTVIAM. Over 314–315 the chain is Cytoplasmic; it reads AR. The helical transmembrane segment at 316–336 threads the bilayer; sequence LQPVVKQVLYLLGAMLLSMAL. The Extracellular portion of the chain corresponds to 337–342; that stretch reads QLDRHG. The chain crosses the membrane as a helical span at residues 343–363; that stretch reads LWNLLGPSLFALGILATAWTV. Residues 364–379 are Cytoplasmic-facing; it reads RSVRRRHCYPPTWRRW. The helical transmembrane segment at 380 to 400 threads the bilayer; the sequence is LFCLCPGSLIAGSAILLYAFV. The Extracellular portion of the chain corresponds to 401-405; it reads ETRDN. Residues 406-426 traverse the membrane as a helical segment; sequence YFYIHSIWHMLIAGSVGFLLP. Residues 427-472 are Cytoplasmic-facing; that stretch reads PRAKTDRRVPSGARARGCGYQLCINEQEELGLVGPGGATVSSICAS.

This sequence belongs to the TMEM8 family. As to quaternary structure, may interact with EZR. In terms of processing, N-glycosylated.

It localises to the cell membrane. Its subcellular location is the cytoplasm. It is found in the nucleus. The protein localises to the mitochondrion. The protein resides in the endoplasmic reticulum. May function as a regulator of the EGFR pathway. Probable tumor suppressor which may function in cell growth, proliferation and adhesion. The sequence is that of Transmembrane protein 8B (TMEM8B) from Bos taurus (Bovine).